The sequence spans 185 residues: Peptidyl-tRNA hydrolase (185 aa).

Tyr14 is a binding site for tRNA. His19 (proton acceptor) is an active-site residue. The tRNA site is built by Tyr65, Asn67, and Asn113.

Belongs to the PTH family. Monomer.

The protein resides in the cytoplasm. It catalyses the reaction an N-acyl-L-alpha-aminoacyl-tRNA + H2O = an N-acyl-L-amino acid + a tRNA + H(+). In terms of biological role, hydrolyzes ribosome-free peptidyl-tRNAs (with 1 or more amino acids incorporated), which drop off the ribosome during protein synthesis, or as a result of ribosome stalling. Its function is as follows. Catalyzes the release of premature peptidyl moieties from peptidyl-tRNA molecules trapped in stalled 50S ribosomal subunits, and thus maintains levels of free tRNAs and 50S ribosomes. The polypeptide is Peptidyl-tRNA hydrolase (Rickettsia felis (strain ATCC VR-1525 / URRWXCal2) (Rickettsia azadi)).